A 160-amino-acid chain; its full sequence is Dihydrofolate reductase (160 aa).

A DHFR domain is found at 2 to 159 (TFSLIVATTL…YDCRFLILTR (158 aa)). Ile6 is a binding site for substrate. Residues Ala8 and 14–20 (VIGKDNQ) contribute to the NADP(+) site. Asp28 serves as a coordination point for substrate. 46-47 (KT) lines the NADP(+) pocket. 2 residues coordinate substrate: Arg53 and Arg58. NADP(+) is bound by residues 64 to 65 (SR) and 96 to 103 (GGGELFKQ). Thr114 contributes to the substrate binding site.

This sequence belongs to the dihydrofolate reductase family.

The catalysed reaction is (6S)-5,6,7,8-tetrahydrofolate + NADP(+) = 7,8-dihydrofolate + NADPH + H(+). The protein operates within cofactor biosynthesis; tetrahydrofolate biosynthesis; 5,6,7,8-tetrahydrofolate from 7,8-dihydrofolate: step 1/1. Key enzyme in folate metabolism. Catalyzes an essential reaction for de novo glycine and purine synthesis, and for DNA precursor synthesis. The chain is Dihydrofolate reductase (folA) from Haemophilus influenzae (strain ATCC 51907 / DSM 11121 / KW20 / Rd).